Here is a 428-residue protein sequence, read N- to C-terminus: Immunoglobulin superfamily containing leucine-rich repeat protein (428 aa).

Positions 1–18 (MQELHLLWWALLLGLAQA) are cleaved as a signal peptide. Residues 19–50 (CPEPCDCGEKYGFQIADCAYRDLESVPPGFPA) enclose the LRRNT domain. An N-linked (GlcNAc...) asparagine glycan is attached at Asn51. LRR repeat units follow at residues 51-72 (NVTT…AFRE), 75-96 (LLQS…ALAS), 99-122 (HLKS…HNLS), 123-144 (ALQL…AFRS), and 147-168 (ALRS…TFTP). An LRRCT domain is found at 180–231 (NPFDCTCGIVWLKTWALTTAVSIPEQDNIACTSPHVLKGTPLSRLPPLPCSA). The Ig-like domain maps to 232-343 (PSVQLSYQPS…GSAESSVDVA (112 aa)). Residues Cys257 and Cys327 are joined by a disulfide bond. Asn309 carries an N-linked (GlcNAc...) asparagine glycan.

Expressed in various tissues including retina, heart, skeletal muscle, prostate, ovary, small intestine, thyroid, adrenal cortex, testis, stomach and spinal cord.

The protein localises to the secreted. This is Immunoglobulin superfamily containing leucine-rich repeat protein (ISLR) from Homo sapiens (Human).